Here is a 614-residue protein sequence, read N- to C-terminus: Dihydroxy-acid dehydratase 1 (614 aa).

Position 81 (D81) interacts with Mg(2+). Residue C122 participates in [2Fe-2S] cluster binding. Mg(2+) contacts are provided by D123 and K124. K124 bears the N6-carboxylysine mark. C195 provides a ligand contact to [2Fe-2S] cluster. E491 lines the Mg(2+) pocket. The Proton acceptor role is filled by S517.

The protein belongs to the IlvD/Edd family. In terms of assembly, homodimer. [2Fe-2S] cluster serves as cofactor. It depends on Mg(2+) as a cofactor.

It carries out the reaction (2R)-2,3-dihydroxy-3-methylbutanoate = 3-methyl-2-oxobutanoate + H2O. It catalyses the reaction (2R,3R)-2,3-dihydroxy-3-methylpentanoate = (S)-3-methyl-2-oxopentanoate + H2O. The protein operates within amino-acid biosynthesis; L-isoleucine biosynthesis; L-isoleucine from 2-oxobutanoate: step 3/4. It participates in amino-acid biosynthesis; L-valine biosynthesis; L-valine from pyruvate: step 3/4. Functionally, functions in the biosynthesis of branched-chain amino acids. Catalyzes the dehydration of (2R,3R)-2,3-dihydroxy-3-methylpentanoate (2,3-dihydroxy-3-methylvalerate) into 2-oxo-3-methylpentanoate (2-oxo-3-methylvalerate) and of (2R)-2,3-dihydroxy-3-methylbutanoate (2,3-dihydroxyisovalerate) into 2-oxo-3-methylbutanoate (2-oxoisovalerate), the penultimate precursor to L-isoleucine and L-valine, respectively. The chain is Dihydroxy-acid dehydratase 1 from Mesorhizobium japonicum (strain LMG 29417 / CECT 9101 / MAFF 303099) (Mesorhizobium loti (strain MAFF 303099)).